The primary structure comprises 440 residues: Chromosomal replication initiator protein DnaA (440 aa).

The domain I, interacts with DnaA modulators stretch occupies residues 1 to 74; it reads MNPSQILENL…VQSGNKAIIN (74 aa). The segment at 74–99 is domain II; that stretch reads NIQAQSAKQSNKSTKIDIAHIKAQST. Positions 100–316 are domain III, AAA+ region; the sequence is ILNPSFTFES…GIIISLNAYA (217 aa). Positions 146, 148, 149, and 150 each coordinate ATP. The interval 317–440 is domain IV, binds dsDNA; that stretch reads TILGQEITLE…KNKILVKSQS (124 aa).

The protein belongs to the DnaA family. As to quaternary structure, oligomerizes as a right-handed, spiral filament on DNA at oriC.

It localises to the cytoplasm. Plays an essential role in the initiation and regulation of chromosomal replication. ATP-DnaA binds to the origin of replication (oriC) to initiate formation of the DNA replication initiation complex once per cell cycle. Binds the DnaA box (a 9 base pair repeat at the origin) and separates the double-stranded (ds)DNA. Forms a right-handed helical filament on oriC DNA; dsDNA binds to the exterior of the filament while single-stranded (ss)DNA is stabiized in the filament's interior. The ATP-DnaA-oriC complex binds and stabilizes one strand of the AT-rich DNA unwinding element (DUE), permitting loading of DNA polymerase. After initiation quickly degrades to an ADP-DnaA complex that is not apt for DNA replication. Binds acidic phospholipids. The protein is Chromosomal replication initiator protein DnaA of Campylobacter jejuni subsp. jejuni serotype O:2 (strain ATCC 700819 / NCTC 11168).